A 366-amino-acid polypeptide reads, in one-letter code: tRNA/tmRNA (uracil-C(5))-methyltransferase (366 aa).

Residues Gln190, Tyr218, Asn223, Glu239, and Asp299 each coordinate S-adenosyl-L-methionine. The active-site Nucleophile is the Cys324. The Proton acceptor role is filled by Glu358.

This sequence belongs to the class I-like SAM-binding methyltransferase superfamily. RNA M5U methyltransferase family. TrmA subfamily.

The catalysed reaction is uridine(54) in tRNA + S-adenosyl-L-methionine = 5-methyluridine(54) in tRNA + S-adenosyl-L-homocysteine + H(+). The enzyme catalyses uridine(341) in tmRNA + S-adenosyl-L-methionine = 5-methyluridine(341) in tmRNA + S-adenosyl-L-homocysteine + H(+). In terms of biological role, dual-specificity methyltransferase that catalyzes the formation of 5-methyluridine at position 54 (m5U54) in all tRNAs, and that of position 341 (m5U341) in tmRNA (transfer-mRNA). In Salmonella paratyphi C (strain RKS4594), this protein is tRNA/tmRNA (uracil-C(5))-methyltransferase.